Consider the following 175-residue polypeptide: Ribosome maturation factor RimM (175 aa).

A PRC barrel domain is found at 96–175; the sequence is EGDYYWHDLI…TIEVDWDAGF (80 aa).

The protein belongs to the RimM family. Binds ribosomal protein uS19.

It localises to the cytoplasm. In terms of biological role, an accessory protein needed during the final step in the assembly of 30S ribosomal subunit, possibly for assembly of the head region. Essential for efficient processing of 16S rRNA. May be needed both before and after RbfA during the maturation of 16S rRNA. It has affinity for free ribosomal 30S subunits but not for 70S ribosomes. The polypeptide is Ribosome maturation factor RimM (Actinobacillus succinogenes (strain ATCC 55618 / DSM 22257 / CCUG 43843 / 130Z)).